A 188-amino-acid polypeptide reads, in one-letter code: Chitin synthase 2 (188 aa).

It belongs to the chitin synthase family.

It is found in the cell membrane. The catalysed reaction is [(1-&gt;4)-N-acetyl-beta-D-glucosaminyl](n) + UDP-N-acetyl-alpha-D-glucosamine = [(1-&gt;4)-N-acetyl-beta-D-glucosaminyl](n+1) + UDP + H(+). Functionally, polymerizes chitin, a structural polymer of the cell wall and septum, by transferring the sugar moiety of UDP-GlcNAc to the non-reducing end of the growing chitin polymer. In Exophiala jeanselmei (Dematiaceous fungus), this protein is Chitin synthase 2 (CHS2).